A 755-amino-acid chain; its full sequence is Biodegradative arginine decarboxylase (755 aa).

K386 carries the post-translational modification N6-(pyridoxal phosphate)lysine.

This sequence belongs to the Orn/Lys/Arg decarboxylase class-I family. As to quaternary structure, homodecamer. The basic unit is a homodimer, organized into a ring of giving a pentamer of five homodimers. It depends on pyridoxal 5'-phosphate as a cofactor.

It is found in the cytoplasm. It catalyses the reaction L-arginine + H(+) = agmatine + CO2. Homodimers are probably inactive, their assembly into a homodecamer at low pH requires neutralization of negatively charged residues. This uses cytoplasmic protons, contributing pH regulation and stabilizes the homodecamer. Component of the acid-resistance (AR) system allowing enteric pathogens to survive the acidic environment in the stomach. ADC can be found in two forms: biodegradative (this enzyme) and biosynthetic (speA). The biodegradative form plays a role in regulating pH by consuming proteins. Converts arginine imported by AdiC to agmatine which is then exported by AdiC. The polypeptide is Biodegradative arginine decarboxylase (adiA) (Escherichia coli (strain K12)).